Reading from the N-terminus, the 517-residue chain is Ribonuclease Y (517 aa).

Residues 1–21 form a helical membrane-spanning segment; that stretch reads MIEVLIGLGAGVAGVGAGYLY. One can recognise a KH domain in the interval 207 to 273; that stretch reads LINVVNIKND…TRVIELLVED (67 aa). In terms of domain architecture, HD spans 333–426; it reads ALAHSLEVAH…VCAADCLSAA (94 aa).

The protein belongs to the RNase Y family.

Its subcellular location is the cell membrane. Its function is as follows. Endoribonuclease that initiates mRNA decay. This is Ribonuclease Y from Campylobacter curvus (strain 525.92).